A 410-amino-acid chain; its full sequence is Phospho-N-acetylmuramoyl-pentapeptide-transferase (410 aa).

Helical transmembrane passes span 27-47 (RMILAAITSLLLSIFLGPYFI), 77-97 (TPTMGGILILSSMLVSLVLWM), 99-119 (LTHIFTLILFVTTVFLGLIGG), 140-160 (LFFQFVLSAAIASYFLLSSVN), 213-233 (PVVTFGGISLILMAFFIFFVI), 248-268 (GLLAGCLVTAAGSLCLIAFVS), 288-308 (IAIYLCALIGASLGFLWYNGY), 312-332 (VFMGDTGSLTLGGILGVSAVL), 337-357 (FLLGIVGGIFVAEALSVILQV), and 389-409 (VIRFWIMSLLFAIIGIASLKF).

Belongs to the glycosyltransferase 4 family. MraY subfamily. Mg(2+) is required as a cofactor.

The protein resides in the cell inner membrane. The enzyme catalyses UDP-N-acetyl-alpha-D-muramoyl-L-alanyl-gamma-D-glutamyl-meso-2,6-diaminopimeloyl-D-alanyl-D-alanine + di-trans,octa-cis-undecaprenyl phosphate = di-trans,octa-cis-undecaprenyl diphospho-N-acetyl-alpha-D-muramoyl-L-alanyl-D-glutamyl-meso-2,6-diaminopimeloyl-D-alanyl-D-alanine + UMP. It functions in the pathway cell wall biogenesis; peptidoglycan biosynthesis. Functionally, catalyzes the initial step of the lipid cycle reactions in the biosynthesis of the cell wall peptidoglycan: transfers peptidoglycan precursor phospho-MurNAc-pentapeptide from UDP-MurNAc-pentapeptide onto the lipid carrier undecaprenyl phosphate, yielding undecaprenyl-pyrophosphoryl-MurNAc-pentapeptide, known as lipid I. In Protochlamydia amoebophila (strain UWE25), this protein is Phospho-N-acetylmuramoyl-pentapeptide-transferase.